The sequence spans 387 residues: L-aspartate:5-guanidino-3-methyl-2-oxopentanoate transaminase (387 aa).

Position 237 is an N6-(pyridoxal phosphate)lysine (Lys237).

Belongs to the class-I pyridoxal-phosphate-dependent aminotransferase family. Requires pyridoxal 5'-phosphate as cofactor.

It carries out the reaction (3R)-5-guanidino-3-methyl-2-oxopentanoate + L-aspartate = (3R)-3-methyl-L-arginine + oxaloacetate. The protein operates within antibiotic biosynthesis. Its function is as follows. Aminotransferase involved in the formation of the rare amino acid 3-methylarginine (MeArg), which is used as a potent antibiotic against the closely related soybean pathogen P.syringae pv. glycinea. Probably catalyzes transamination from the donor L-aspartate to 5-guanidino-3-methyl-2-oxopentanoic acid, generating 3-methylarginine. The protein is L-aspartate:5-guanidino-3-methyl-2-oxopentanoate transaminase of Pseudomonas syringae pv. syringae.